The chain runs to 398 residues: Acetate kinase (398 aa).

N7 contacts Mg(2+). Residue K14 coordinates ATP. Substrate is bound at residue R90. Catalysis depends on D147, which acts as the Proton donor/acceptor. Residues 207–211 (HLGNG), 282–284 (DMR), and 330–334 (GIGEN) contribute to the ATP site. Mg(2+) is bound at residue E383.

This sequence belongs to the acetokinase family. As to quaternary structure, homodimer. It depends on Mg(2+) as a cofactor. Requires Mn(2+) as cofactor.

The protein resides in the cytoplasm. The enzyme catalyses acetate + ATP = acetyl phosphate + ADP. The protein operates within metabolic intermediate biosynthesis; acetyl-CoA biosynthesis; acetyl-CoA from acetate: step 1/2. In terms of biological role, catalyzes the formation of acetyl phosphate from acetate and ATP. Can also catalyze the reverse reaction. The polypeptide is Acetate kinase (Symbiobacterium thermophilum (strain DSM 24528 / JCM 14929 / IAM 14863 / T)).